Consider the following 1414-residue polypeptide: DNA-directed RNA polymerase subunit beta'' (1414 aa).

Cys-220, Cys-293, Cys-300, and Cys-303 together coordinate Zn(2+).

The protein belongs to the RNA polymerase beta' chain family. RpoC2 subfamily. As to quaternary structure, in plastids the minimal PEP RNA polymerase catalytic core is composed of four subunits: alpha, beta, beta', and beta''. When a (nuclear-encoded) sigma factor is associated with the core the holoenzyme is formed, which can initiate transcription. Requires Zn(2+) as cofactor.

The protein resides in the plastid. It is found in the chloroplast. It catalyses the reaction RNA(n) + a ribonucleoside 5'-triphosphate = RNA(n+1) + diphosphate. DNA-dependent RNA polymerase catalyzes the transcription of DNA into RNA using the four ribonucleoside triphosphates as substrates. In Angiopteris evecta (Mule's foot fern), this protein is DNA-directed RNA polymerase subunit beta''.